A 332-amino-acid polypeptide reads, in one-letter code: Tetraacyldisaccharide 4'-kinase (332 aa).

Position 58–65 (58–65 (TVGGSGKT)) interacts with ATP.

Belongs to the LpxK family.

The enzyme catalyses a lipid A disaccharide + ATP = a lipid IVA + ADP + H(+). It functions in the pathway glycolipid biosynthesis; lipid IV(A) biosynthesis; lipid IV(A) from (3R)-3-hydroxytetradecanoyl-[acyl-carrier-protein] and UDP-N-acetyl-alpha-D-glucosamine: step 6/6. Functionally, transfers the gamma-phosphate of ATP to the 4'-position of a tetraacyldisaccharide 1-phosphate intermediate (termed DS-1-P) to form tetraacyldisaccharide 1,4'-bis-phosphate (lipid IVA). In Shewanella piezotolerans (strain WP3 / JCM 13877), this protein is Tetraacyldisaccharide 4'-kinase.